The primary structure comprises 339 residues: Geranylgeranyl pyrophosphate synthase AN1592 (339 aa).

Isopentenyl diphosphate is bound by residues Lys-41, Arg-44, and His-73. Positions 80 and 84 each coordinate Mg(2+). Position 89 (Arg-89) interacts with dimethylallyl diphosphate. Arg-90 is an isopentenyl diphosphate binding site. The dimethylallyl diphosphate site is built by Lys-192, Thr-193, and Gln-228. Mg(2+) is bound at residue Asp-231. The dimethylallyl diphosphate site is built by Asn-235, Lys-245, and Lys-255.

It belongs to the FPP/GGPP synthase family. It depends on Mg(2+) as a cofactor.

It carries out the reaction isopentenyl diphosphate + dimethylallyl diphosphate = (2E)-geranyl diphosphate + diphosphate. The enzyme catalyses isopentenyl diphosphate + (2E)-geranyl diphosphate = (2E,6E)-farnesyl diphosphate + diphosphate. The catalysed reaction is isopentenyl diphosphate + (2E,6E)-farnesyl diphosphate = (2E,6E,10E)-geranylgeranyl diphosphate + diphosphate. It participates in secondary metabolite biosynthesis. Geranylgeranyl pyrophosphate synthase; part of the gene cluster that mediates the biosynthesis of erinacines, cyathane-xylosides that show unique biological activities, including leishmanicidal activity, stimulating activity for nerve growth-factor synthesis, and agonistic activity toward the kappa opioid receptor. The geranylgeranyl diphosphate (GGPP) synthase eriE catalyzes the first step in erinacines biosynthesis via conversion of farnesyl pyrophosphate and isopentyl pyrophosphate into geranylgeranyl pyrophosphate (GGPP). GGPP is then substrate of the diterpene cyclase eriG for the production of cyatha-3,12-diene. The cytochrome P450 monooxygenase eriI then hydroxylates cyatha-3,12-diene at C-14 of the seven-membered ring to produce erinacol, which is further hydroxylated at C-15 by the cytochrome P450 monooxygenase eriC to yield cyathadiol. The cytochrome P450 monooxygenase eriA then catalyzes C-11 hydroxylation in the presence of the short chain dehydrogenase/reductase (SDR) eriH, which leads to the production of cyathatriol. The acetyltransferase eriL converts cyathatriol into 11-O-acetyl-cyathatriol. The SDR eriH catalyzes further oxidation of 11-O-acetyl-cyathatriol into 1-O-acetylcyathin A3. Finally, the glycosyl transferase eriJ tranfers xylose from UDP-xylose onto C-14 of 11-O-acetyl-cyathatriol to form eracine Q. EriJ is also able to convert 11-O-acetyl-cyathatriol to eracine Q2 by using UDP-D-glucose as cosubstrate, but at a lower rate. In the absence of eriL and eriJ, the SDR eriH is able to convert cyathatriol to cyathin A3; this is likely a switching mechanism in the biosynthesis of cyathins (C-14 ketogroup)and erinacines (C-14 glycosylated group). The roles of the SDR eriB, the polyprenyl transferase eriF and the dehydrogenase eriK have still to be identified. The sequence is that of Geranylgeranyl pyrophosphate synthase AN1592 from Hericium erinaceus (Lion's mane mushroom).